Consider the following 406-residue polypeptide: Tryptophan synthase beta chain (406 aa).

The residue at position 99 (lysine 99) is an N6-(pyridoxal phosphate)lysine.

Belongs to the TrpB family. In terms of assembly, tetramer of two alpha and two beta chains. Pyridoxal 5'-phosphate is required as a cofactor.

It carries out the reaction (1S,2R)-1-C-(indol-3-yl)glycerol 3-phosphate + L-serine = D-glyceraldehyde 3-phosphate + L-tryptophan + H2O. Its pathway is amino-acid biosynthesis; L-tryptophan biosynthesis; L-tryptophan from chorismate: step 5/5. The beta subunit is responsible for the synthesis of L-tryptophan from indole and L-serine. This chain is Tryptophan synthase beta chain, found in Phenylobacterium zucineum (strain HLK1).